We begin with the raw amino-acid sequence, 297 residues long: Lipoyl synthase (297 aa).

Residues cysteine 34, cysteine 39, cysteine 45, cysteine 60, cysteine 64, cysteine 67, and serine 273 each contribute to the [4Fe-4S] cluster site. Positions 46–262 (WNKRHATVMI…KYVAYSKGFL (217 aa)) constitute a Radical SAM core domain.

It belongs to the radical SAM superfamily. Lipoyl synthase family. It depends on [4Fe-4S] cluster as a cofactor.

It is found in the cytoplasm. The catalysed reaction is [[Fe-S] cluster scaffold protein carrying a second [4Fe-4S](2+) cluster] + N(6)-octanoyl-L-lysyl-[protein] + 2 oxidized [2Fe-2S]-[ferredoxin] + 2 S-adenosyl-L-methionine + 4 H(+) = [[Fe-S] cluster scaffold protein] + N(6)-[(R)-dihydrolipoyl]-L-lysyl-[protein] + 4 Fe(3+) + 2 hydrogen sulfide + 2 5'-deoxyadenosine + 2 L-methionine + 2 reduced [2Fe-2S]-[ferredoxin]. The protein operates within protein modification; protein lipoylation via endogenous pathway; protein N(6)-(lipoyl)lysine from octanoyl-[acyl-carrier-protein]: step 2/2. In terms of biological role, catalyzes the radical-mediated insertion of two sulfur atoms into the C-6 and C-8 positions of the octanoyl moiety bound to the lipoyl domains of lipoate-dependent enzymes, thereby converting the octanoylated domains into lipoylated derivatives. The polypeptide is Lipoyl synthase (Ehrlichia chaffeensis (strain ATCC CRL-10679 / Arkansas)).